Reading from the N-terminus, the 970-residue chain is Type III restriction-modification enzyme EcoP15I Res subunit (970 aa).

The interval 75–540 is helicase-like domain; it reads AKSNIIDVSM…EVGRGLRLPV (466 aa). Residues threonine 91, glycine 122, phenylalanine 126, and aspartate 226 each coordinate AMP. An endonuclease domain region spans residues 894–918; the sequence is TYSPDFAYVVKTAEGDYLNFIIETK.

It belongs to the type III restriction-modification system Res protein family. As to quaternary structure, a heterotetramer with stoichiometry Res(2)Mod(2). A heterotrimer with stoichiometry Res(1)Mod(2). Requires Mg(2+) as cofactor. S-adenosyl-L-methionine serves as cofactor.

The catalysed reaction is Endonucleolytic cleavage of DNA to give specific double-stranded fragments with terminal 5'-phosphates.. A type III restriction enzyme that recognizes 2 inversely oriented double-stranded sequences 5'-CAGCAG-3' and cleaves DNA 25-27 base pairs downstream of one site. DNA restriction requires both the Res and Mod subunits. DNA topology affects its action; relaxed and negatively supercoiled DNA are digested but positively supercoiled DNA is not a good substrate. Interacts with DNA approximately one half-turn downstream of the recognition site. After binding to one recognition site undergoes random one-dimensional diffusion along DNA until it collides with a stationary enzyme bound to the second DNA site, which is when DNA cleavage occurs. This chain is Type III restriction-modification enzyme EcoP15I Res subunit, found in Escherichia coli.